The primary structure comprises 410 residues: E3 ubiquitin-protein ligase PRT1 (410 aa).

2 RING-type zinc fingers span residues 26-66 and 192-232; these read CCVC…PICR and CSAC…QECN. A ZZ-type zinc finger spans residues 306–370; sequence HFGAGCDSCG…RLELARSPQV (65 aa). Positions 311, 314, 326, 329, 338, 341, 356, and 360 each coordinate Zn(2+). The tract at residues 385-410 is disordered; sequence ISNEGMDTDEGEEGPPGSSNESSSTE. Residues 399–410 are compositionally biased toward low complexity; it reads PPGSSNESSSTE.

The protein resides in the cytoplasm. The catalysed reaction is S-ubiquitinyl-[E2 ubiquitin-conjugating enzyme]-L-cysteine + [acceptor protein]-L-lysine = [E2 ubiquitin-conjugating enzyme]-L-cysteine + N(6)-ubiquitinyl-[acceptor protein]-L-lysine.. The protein operates within protein modification; protein ubiquitination. Functionally, E3 ubiquitin-protein ligase that mediates ubiquitination and subsequent proteasomal degradation of target proteins. Functions in the N-end rule pathway of protein degradation, where it specifically recognizes and ubiquitinates proteins with a N-terminal bulky aromatic amino acid (Phe). Does not act on aliphatic hydrophobic and basic N-terminal residues (Arg or Leu) containing proteins. In Arabidopsis thaliana (Mouse-ear cress), this protein is E3 ubiquitin-protein ligase PRT1 (PRT1).